The sequence spans 168 residues: uncharacterized protein (168 aa).

The region spanning 1-166 (MRVLILAENE…FCGELIKILK (166 aa)) is the PfpI endopeptidase domain.

Belongs to the peptidase C56 family.

This is an uncharacterized protein from Archaeoglobus fulgidus (strain ATCC 49558 / DSM 4304 / JCM 9628 / NBRC 100126 / VC-16).